Reading from the N-terminus, the 75-residue chain is Protease B inhibitor 2 (75 aa).

Thr74 carries the post-translational modification Phosphothreonine.

It belongs to the protease inhibitor I9 family. As to quaternary structure, part of the heterodimeric LMA1 complex together with the thioredoxin II/TRX2. LMA1 binds to the ATPase SEC18.

It is found in the cytoplasm. Its function is as follows. Cytosolic inhibitor of vacuolar proteinase B (yscB), probably regulating protease B activity during limited proteolysis. PBI2 is a component of the LMA1 complex, which is involved in the facilitation of vesicle fusion such as homotypic vacuole and ER-derived COPII vesicle fusion with the Golgi. In Saccharomyces cerevisiae (strain ATCC 204508 / S288c) (Baker's yeast), this protein is Protease B inhibitor 2 (PBI2).